Here is a 545-residue protein sequence, read N- to C-terminus: CTP synthase (545 aa).

Residues 1–266 (MTTNYIFVTG…DDYICKRFSL (266 aa)) are amidoligase domain. Ser14 contacts CTP. Ser14 is a binding site for UTP. ATP-binding positions include 15 to 20 (SLGKGI) and Asp72. 2 residues coordinate Mg(2+): Asp72 and Glu140. CTP is bound by residues 147 to 149 (DIE), 187 to 192 (KTKPTQ), and Lys223. UTP-binding positions include 187-192 (KTKPTQ) and Lys223. ATP is bound at residue 239–241 (KDV). Residues 291–542 (TIGMVGKYIE…VKAASEFQKR (252 aa)) form the Glutamine amidotransferase type-1 domain. Gly352 provides a ligand contact to L-glutamine. Residue Cys379 is the Nucleophile; for glutamine hydrolysis of the active site. L-glutamine-binding positions include 380–383 (LGMQ), Glu403, and Arg470. Catalysis depends on residues His515 and Glu517.

This sequence belongs to the CTP synthase family. As to quaternary structure, homotetramer.

It carries out the reaction UTP + L-glutamine + ATP + H2O = CTP + L-glutamate + ADP + phosphate + 2 H(+). It catalyses the reaction L-glutamine + H2O = L-glutamate + NH4(+). The enzyme catalyses UTP + NH4(+) + ATP = CTP + ADP + phosphate + 2 H(+). The protein operates within pyrimidine metabolism; CTP biosynthesis via de novo pathway; CTP from UDP: step 2/2. With respect to regulation, allosterically activated by GTP, when glutamine is the substrate; GTP has no effect on the reaction when ammonia is the substrate. The allosteric effector GTP functions by stabilizing the protein conformation that binds the tetrahedral intermediate(s) formed during glutamine hydrolysis. Inhibited by the product CTP, via allosteric rather than competitive inhibition. Its function is as follows. Catalyzes the ATP-dependent amination of UTP to CTP with either L-glutamine or ammonia as the source of nitrogen. Regulates intracellular CTP levels through interactions with the four ribonucleotide triphosphates. The protein is CTP synthase of Escherichia coli O127:H6 (strain E2348/69 / EPEC).